We begin with the raw amino-acid sequence, 443 residues long: MSEMTPREIVSELDKHIIGQDNAKRSVAIALRNRWRRMQLNEELRHEVTPKNILMIGPTGVGKTEIARRLAKLANAPLIKVEATKFTEVGYVGKEVDSIIRDLTDAAVKMVRVQAIEKNRYRAEELAEERILDVLIPPAKNNWGQTEQQQEPSAARQAFRKKLREGQLDDKEIEIDLAAAPMGVEIMAPPGMEEMTSQLQSMFQNLGGQKQKARKLKIKDAMKLLIEEEAAKLVNPEELKQDAIDAVEQHGIVFIDEIDKICKRGESSGPDVSREGVQRDLLPLVEGCTVSTKHGMVKTDHILFIASGAFQIAKPSDLIPELQGRLPIRVELQALTTSDFERILTEPNASITVQYKALMATEGVNIEFTDSGIKRIAEAAWQVNESTENIGARRLHTVLERLMEEISYDASDLSGQNITIDADYVSKHLDALVADEDLSRFIL.

Residues I18, 60–65 (GVGKTE), D256, E321, and R393 contribute to the ATP site.

The protein belongs to the ClpX chaperone family. HslU subfamily. As to quaternary structure, a double ring-shaped homohexamer of HslV is capped on each side by a ring-shaped HslU homohexamer. The assembly of the HslU/HslV complex is dependent on binding of ATP.

It is found in the cytoplasm. In terms of biological role, ATPase subunit of a proteasome-like degradation complex; this subunit has chaperone activity. The binding of ATP and its subsequent hydrolysis by HslU are essential for unfolding of protein substrates subsequently hydrolyzed by HslV. HslU recognizes the N-terminal part of its protein substrates and unfolds these before they are guided to HslV for hydrolysis. In Shigella dysenteriae serotype 1 (strain Sd197), this protein is ATP-dependent protease ATPase subunit HslU.